Reading from the N-terminus, the 490-residue chain is MQFSTFQKNLDNWQGASLIFGVLEEEIASQLENIKFIVDPKLLLKKVTQKKFKGEKGETLSFEFLDQKLETLIIVGLGKSKYLNKSDIENSIGNLIRKTVDKNEKISILLPWELINSQLEINQLAESARLSAYKDNRFNKKKDEKKVLKEIEFLNFKSFENICFEEAEKICEGVELARRLVAAPPNSLTPQEMSMQASQIAKDHGLEVKILEAKECEDLGMGAYLAVAKGSDLDPKFIHLTLKSEGPIKEKIAIVGKGLTFDSGGYNLKVGASQIEMMKYDMGGSAAVLGAAKALGAIKPKGLEIHFIVAACENMINGSAVHPGDVVKASNGKTIEINNTDAEGRLTLADALTYASDLKPDSIIDLATLTGAIVVALGNDVAGFWSNNDDLANDLKAASAQAGEELWRMPLQKAYKEGLKSHIADMKNTGPRAGGSITAALFLEEFFDTEIKWAHIDIAGTCWTDKNKGINPSGATGFGVKTLVQWIKNK.

Mn(2+) is bound by residues Lys257 and Asp262. Residue Lys269 is part of the active site. Mn(2+) contacts are provided by Asp281, Asp341, and Glu343. Arg345 is a catalytic residue.

Belongs to the peptidase M17 family. Mn(2+) is required as a cofactor.

Its subcellular location is the cytoplasm. The enzyme catalyses Release of an N-terminal amino acid, Xaa-|-Yaa-, in which Xaa is preferably Leu, but may be other amino acids including Pro although not Arg or Lys, and Yaa may be Pro. Amino acid amides and methyl esters are also readily hydrolyzed, but rates on arylamides are exceedingly low.. The catalysed reaction is Release of an N-terminal amino acid, preferentially leucine, but not glutamic or aspartic acids.. In terms of biological role, presumably involved in the processing and regular turnover of intracellular proteins. Catalyzes the removal of unsubstituted N-terminal amino acids from various peptides. This is Probable cytosol aminopeptidase from Prochlorococcus marinus (strain MIT 9312).